The primary structure comprises 266 residues: Putative hydro-lyase Jann_2570 (266 aa).

This sequence belongs to the D-glutamate cyclase family.

The chain is Putative hydro-lyase Jann_2570 from Jannaschia sp. (strain CCS1).